The chain runs to 32 residues: Protamine-3A (32 aa).

The segment at 1-32 is disordered; that stretch reads PRRRRRSSSRPIRRRRRPRVSRRRRRGGRRRR.

As to expression, testis.

It is found in the nucleus. The protein resides in the chromosome. Protamines substitute for histones in the chromatin of sperm during the haploid phase of spermatogenesis. They compact sperm DNA into a highly condensed, stable and inactive complex. This chain is Protamine-3A, found in Oncorhynchus mykiss (Rainbow trout).